A 424-amino-acid polypeptide reads, in one-letter code: Circumsporozoite protein (424 aa).

The signal sequence occupies residues 1–18; that stretch reads MMRKLAILSVSSFLFVEA. A disordered region spans residues 69 to 339; sequence SRSLGENDDG…VKNNNNEEPS (271 aa). Positions 85–106 are enriched in basic and acidic residues; the sequence is NNREGKDEDKRDGNNEDNETLR. The segment at 104 to 111 is required for the binding to heparan sulfate proteoglycans (HSPGs) on the surface of host hepatocytes; sequence TLRKPKHK. The region I; contains the proteolytic cleavage site stretch occupies residues 112–116; the sequence is KLKQP. Low complexity predominate over residues 120-300; it reads NPDPNANPNV…PNANPNANPN (181 aa). Repeat copies occupy residues 123–126, 127–130, 131–134, 135–138, 139–142, 143–146, 147–150, 151–154, 155–158, 159–162, 163–166, 167–170, 171–174, 175–178, 179–182, 183–186, 187–190, 191–194, 195–198, 199–202, 203–206, 207–210, 211–214, 215–218, 219–222, 223–226, 227–230, 231–234, 235–238, 239–242, 243–246, 247–250, 251–254, 255–258, 259–262, 263–266, 267–270, 271–274, 275–278, 279–282, 283–286, 287–290, 291–294, and 295–298. Positions 123–298 are 44 X 4 AA tandem repeats of P-N-[AV]-[ND]; sequence PNANPNVDPN…ANPNANPNAN (176 aa). Residues 301–316 show a composition bias toward polar residues; that stretch reads KNNQGNGQGHNMPNDP. A compositionally biased stretch (low complexity) spans 322 to 336; it reads ENANANNAVKNNNNE. The 54-residue stretch at 349–402 folds into the TSP type-1 domain; it reads KIQNSLSTEWSPCSVTCGNGIQVRIKPGSANKPKDELDYENDIEKKICKMEKCS. Disulfide bonds link cysteine 361–cysteine 396 and cysteine 365–cysteine 401. Threonine 364 carries an O-linked (Fuc) threonine glycan. Cysteine 401 carries GPI-anchor amidated cysteine lipidation. A propeptide spans 402–424 (removed in mature form); sequence SSVFNVVNSSIGLIMVLSFLFLN.

It belongs to the plasmodium circumsporozoite protein family. In terms of processing, during host cell invasion, proteolytically cleaved at the cell membrane in the region I by a papain-like cysteine protease of parasite origin. Cleavage is triggered by the sporozoite contact with highly sulfated heparan sulfate proteoglycans (HSPGs) present on the host hepatocyte cell surface. Cleavage exposes the TSP type-1 (TSR) domain and is required for productive invasion of host hepatocytes but not for adhesion to the host cell membrane. Cleavage is dispensable for sporozoite development in the oocyst, motility and for traversal of host and vector cells. O-glycosylated; maybe by POFUT2.

It is found in the cell membrane. The protein resides in the cytoplasm. Essential sporozoite protein. In the mosquito vector, required for sporozoite development in the oocyst, migration through the vector hemolymph and entry into the vector salivary glands. In the vertebrate host, required for sporozoite migration through the host dermis and infection of host hepatocytes. Binds to highly sulfated heparan sulfate proteoglycans (HSPGs) on the surface of host hepatocytes. Its function is as follows. In the vertebrate host, binds to highly sulfated heparan sulfate proteoglycans (HSPGs) on the surface of host hepatocytes and is required for sporozoite invasion of the host hepatocytes. The protein is Circumsporozoite protein of Plasmodium falciparum (isolate t4 / Thailand).